A 180-amino-acid polypeptide reads, in one-letter code: Protein SPMIP9 (180 aa).

As to quaternary structure, microtubule inner protein component of sperm flagellar doublet microtubules. As to expression, only detected after the mouse is 35 days old. Expression increases gradually from day 35 to 6 months, and remains stable after 54 days. Exclusively expressed in the epididymis and testis.

It is found in the nucleus. It localises to the cytoplasm. Its subcellular location is the cytoskeleton. The protein resides in the flagellum axoneme. Functionally, microtubule inner protein (MIP) part of the dynein-decorated doublet microtubules (DMTs) in flagella axoneme. The polypeptide is Protein SPMIP9 (Spmip9) (Mus musculus (Mouse)).